The chain runs to 179 residues: Large ribosomal subunit protein uL5 (179 aa).

The protein belongs to the universal ribosomal protein uL5 family. In terms of assembly, part of the 50S ribosomal subunit; part of the 5S rRNA/L5/L18/L25 subcomplex. Contacts the 5S rRNA and the P site tRNA. Forms a bridge to the 30S subunit in the 70S ribosome.

In terms of biological role, this is one of the proteins that bind and probably mediate the attachment of the 5S RNA into the large ribosomal subunit, where it forms part of the central protuberance. In the 70S ribosome it contacts protein S13 of the 30S subunit (bridge B1b), connecting the 2 subunits; this bridge is implicated in subunit movement. Contacts the P site tRNA; the 5S rRNA and some of its associated proteins might help stabilize positioning of ribosome-bound tRNAs. This is Large ribosomal subunit protein uL5 from Geotalea uraniireducens (strain Rf4) (Geobacter uraniireducens).